A 256-amino-acid chain; its full sequence is tRNA (guanine-N(7)-)-methyltransferase (256 aa).

A disordered region spans residues 1 to 43; it reads MDVDPVNSEMELDNKPTCETVPGLPQKKHYRQRAHSNPHSDHD. Residues 26–36 are compositionally biased toward basic residues; that stretch reads QKKHYRQRAHS. Residues Gly74, 97–98, 132–133, and Leu152 contribute to the S-adenosyl-L-methionine site; these read EI and NA. Asp155 is an active-site residue. Residue 230 to 232 coordinates S-adenosyl-L-methionine; sequence TEE.

This sequence belongs to the class I-like SAM-binding methyltransferase superfamily. TrmB family.

The protein localises to the nucleus. The catalysed reaction is guanosine(46) in tRNA + S-adenosyl-L-methionine = N(7)-methylguanosine(46) in tRNA + S-adenosyl-L-homocysteine. It participates in tRNA modification; N(7)-methylguanine-tRNA biosynthesis. Its function is as follows. Catalyzes the formation of N(7)-methylguanine at position 46 (m7G46) in tRNA. The protein is tRNA (guanine-N(7)-)-methyltransferase of Caenorhabditis briggsae.